A 638-amino-acid polypeptide reads, in one-letter code: XK-related protein 6 (638 aa).

2 disordered regions span residues 24-43 and 82-117; these read VGSG…GGDG and RSAA…PASP. Residues 33-43 are compositionally biased toward gly residues; that stretch reads PGGGGCGGGDG. Transmembrane regions (helical) follow at residues 127–147, 158–178, 315–335, 369–389, 410–430, 439–459, and 470–490; these read LWIV…LWLA, CFGL…SLSF, TLPC…LASY, VISF…FVVV, WEEI…WFNV, MFAY…LWYF, and AVPA…LMLL.

It belongs to the XK family.

Its subcellular location is the cell membrane. In Mus musculus (Mouse), this protein is XK-related protein 6.